Consider the following 185-residue polypeptide: Ribosome-recycling factor (185 aa).

It belongs to the RRF family.

It is found in the cytoplasm. Its function is as follows. Responsible for the release of ribosomes from messenger RNA at the termination of protein biosynthesis. May increase the efficiency of translation by recycling ribosomes from one round of translation to another. The sequence is that of Ribosome-recycling factor from Pseudomonas savastanoi pv. phaseolicola (strain 1448A / Race 6) (Pseudomonas syringae pv. phaseolicola (strain 1448A / Race 6)).